Consider the following 329-residue polypeptide: uncharacterized protein (329 aa).

The protein to type I restriction system adenine methylases.

This is an uncharacterized protein from Bacillus subtilis (strain 168).